Reading from the N-terminus, the 684-residue chain is Agnestins biosynthesis cluster transcription factor AgnL11 (684 aa).

A DNA-binding region (zn(2)-C6 fungal-type) is located at residues 25–51; sequence CHFCRTKKLKCDRRFPCSNCRARRLSC. A coiled-coil region spans residues 76–103; the sequence is NEELSENINELKARLQRLEELISVNAEE. The tract at residues 601–644 is disordered; the sequence is KGSASARKDKNPIHGDTDRATPPGSSNLPQHDKSSSSSPAPPVW. The span at 606–619 shows a compositional bias: basic and acidic residues; that stretch reads ARKDKNPIHGDTDR.

The protein localises to the nucleus. Its function is as follows. Transcription factor that regulates the expression of the gene cluster that mediates the biosynthesis of agnestins, dihydroxy-xanthone metabolites. In Paecilomyces divaricatus (Penicillium divaricatum), this protein is Agnestins biosynthesis cluster transcription factor AgnL11.